The sequence spans 334 residues: MQDRLISGTEKPEDHFDRAIRPTSLADYIGQPVVREQMEIFIGAARGRGEALDHTLIFGPPGLGKTTLANIIAREMGGNLKSTSGPVLERAGDLAAMLTNLEEGDVLFIDEIHRLSPVIEEILYPAMEDYQLDIMIGEGPAARSIKLDLPPFTLVAATTRAGLLTSPLRDRFGIVQRLEFYSVEDLTHIVSRSANLMDVPITVEGAEEVARRSRGTPRIANRLLRRVRDYAQVKGTGEVNHEMAQRALDMLNVDKAGLDTLDRRYLSMLLERFDGGPAGVEALAAAMAEDSGTLEDVIEPYLIQQGYVMRTARGRIATNQSYLQFGMTPPEPKN.

The interval 1–181 (MQDRLISGTE…FGIVQRLEFY (181 aa)) is large ATPase domain (RuvB-L). Residues isoleucine 20, arginine 21, glycine 62, lysine 65, threonine 66, threonine 67, 128–130 (EDY), arginine 171, tyrosine 181, and arginine 218 contribute to the ATP site. Threonine 66 serves as a coordination point for Mg(2+). The small ATPAse domain (RuvB-S) stretch occupies residues 182-252 (SVEDLTHIVS…MAQRALDMLN (71 aa)). The segment at 255 to 334 (KAGLDTLDRR…FGMTPPEPKN (80 aa)) is head domain (RuvB-H). 2 residues coordinate DNA: arginine 310 and arginine 315.

This sequence belongs to the RuvB family. In terms of assembly, homohexamer. Forms an RuvA(8)-RuvB(12)-Holliday junction (HJ) complex. HJ DNA is sandwiched between 2 RuvA tetramers; dsDNA enters through RuvA and exits via RuvB. An RuvB hexamer assembles on each DNA strand where it exits the tetramer. Each RuvB hexamer is contacted by two RuvA subunits (via domain III) on 2 adjacent RuvB subunits; this complex drives branch migration. In the full resolvosome a probable DNA-RuvA(4)-RuvB(12)-RuvC(2) complex forms which resolves the HJ.

Its subcellular location is the cytoplasm. It catalyses the reaction ATP + H2O = ADP + phosphate + H(+). In terms of biological role, the RuvA-RuvB-RuvC complex processes Holliday junction (HJ) DNA during genetic recombination and DNA repair, while the RuvA-RuvB complex plays an important role in the rescue of blocked DNA replication forks via replication fork reversal (RFR). RuvA specifically binds to HJ cruciform DNA, conferring on it an open structure. The RuvB hexamer acts as an ATP-dependent pump, pulling dsDNA into and through the RuvAB complex. RuvB forms 2 homohexamers on either side of HJ DNA bound by 1 or 2 RuvA tetramers; 4 subunits per hexamer contact DNA at a time. Coordinated motions by a converter formed by DNA-disengaged RuvB subunits stimulates ATP hydrolysis and nucleotide exchange. Immobilization of the converter enables RuvB to convert the ATP-contained energy into a lever motion, pulling 2 nucleotides of DNA out of the RuvA tetramer per ATP hydrolyzed, thus driving DNA branch migration. The RuvB motors rotate together with the DNA substrate, which together with the progressing nucleotide cycle form the mechanistic basis for DNA recombination by continuous HJ branch migration. Branch migration allows RuvC to scan DNA until it finds its consensus sequence, where it cleaves and resolves cruciform DNA. This Acinetobacter baumannii (strain AB307-0294) protein is Holliday junction branch migration complex subunit RuvB.